The chain runs to 361 residues: POU domain, class 3, transcription factor 4-A (361 aa).

Disordered stretches follow at residues 100–131 (HVNH…GQPI), 150–189 (LTPP…EETP), and 333–361 (EKRM…CNEL). Residues 119 to 131 (AHNSSLTSSGQPI) are compositionally biased toward polar residues. Over residues 165–183 (VLREPNDHVDLGSHHCQDH) the composition is skewed to basic and acidic residues. The POU-specific domain maps to 186–260 (EETPTSDELE…LLNKWLEEAD (75 aa)). The homeobox DNA-binding region spans 278-337 (KRKKRTSIEVSVKGVLETHFLKCPKPAALEITSLADSLQLEKEVVRVWFCNRRQKEKRMT).

The protein belongs to the POU transcription factor family. Class-3 subfamily. From embryonic stage 10, expressed in the Spemann's organizer. During gastrulation, expressed in both the involuting mesoderm and the overlying neuroectoderm. During the neural plate and neural fold stages, expressed in the entire neuroectoderm with expression in discrete regions of the developing nervous system persisting at later stages. Transiently expressed in the pronephros from stages 24-32. In adults, expressed in the kidney and brain.

It localises to the nucleus. Functionally, transcriptional activator. Induces neural-specific gene expression to act as a key regulator of neural differentiation. This is POU domain, class 3, transcription factor 4-A (pou3f4-a) from Xenopus laevis (African clawed frog).